We begin with the raw amino-acid sequence, 361 residues long: Chorismate synthase (361 aa).

Arginine 48 lines the NADP(+) pocket. Residues 125–127 (RSS), 238–239 (NA), glycine 278, 293–297 (KPTSS), and arginine 319 contribute to the FMN site.

It belongs to the chorismate synthase family. Homotetramer. FMNH2 serves as cofactor.

The catalysed reaction is 5-O-(1-carboxyvinyl)-3-phosphoshikimate = chorismate + phosphate. It functions in the pathway metabolic intermediate biosynthesis; chorismate biosynthesis; chorismate from D-erythrose 4-phosphate and phosphoenolpyruvate: step 7/7. Functionally, catalyzes the anti-1,4-elimination of the C-3 phosphate and the C-6 proR hydrogen from 5-enolpyruvylshikimate-3-phosphate (EPSP) to yield chorismate, which is the branch point compound that serves as the starting substrate for the three terminal pathways of aromatic amino acid biosynthesis. This reaction introduces a second double bond into the aromatic ring system. The chain is Chorismate synthase from Vibrio anguillarum (strain ATCC 68554 / 775) (Listonella anguillarum).